Here is a 323-residue protein sequence, read N- to C-terminus: Quinolinate synthase (323 aa).

Iminosuccinate contacts are provided by His39 and Ser56. A [4Fe-4S] cluster-binding site is contributed by Cys101. Iminosuccinate contacts are provided by residues 127–129 (YIN) and Ser144. Cys187 serves as a coordination point for [4Fe-4S] cluster. Residues 213-215 (HPE) and Thr230 each bind iminosuccinate. Residue Cys280 participates in [4Fe-4S] cluster binding.

It belongs to the quinolinate synthase family. Type 2 subfamily. [4Fe-4S] cluster serves as cofactor.

The protein resides in the cytoplasm. It carries out the reaction iminosuccinate + dihydroxyacetone phosphate = quinolinate + phosphate + 2 H2O + H(+). Its pathway is cofactor biosynthesis; NAD(+) biosynthesis; quinolinate from iminoaspartate: step 1/1. Catalyzes the condensation of iminoaspartate with dihydroxyacetone phosphate to form quinolinate. This Chlorobium phaeobacteroides (strain DSM 266 / SMG 266 / 2430) protein is Quinolinate synthase.